The primary structure comprises 985 residues: Alpha-glucosidase (985 aa).

The first 25 residues, 1–25 (MAGLKSFLASSWLLPVACGASQSIV), serve as a signal peptide directing secretion. N-linked (GlcNAc...) asparagine glycosylation is found at Asn126, Asn145, Asn220, Asn255, Asn349, and Asn424. Asp492 (nucleophile) is an active-site residue. Glu495 is an active-site residue. N-linked (GlcNAc...) asparagine glycans are attached at residues Asn508, Asn536, Asn539, Asn602, and Asn624. Asp660 acts as the Proton donor in catalysis. 5 N-linked (GlcNAc...) asparagine glycosylation sites follow: Asn661, Asn835, Asn881, Asn929, and Asn957.

The protein belongs to the glycosyl hydrolase 31 family.

It catalyses the reaction Hydrolysis of terminal, non-reducing (1-&gt;4)-linked alpha-D-glucose residues with release of alpha-D-glucose.. In terms of biological role, hydrolyzes malto-oligosaccharides, but has a low activity toward soluble starch. In Aspergillus oryzae (strain ATCC 42149 / RIB 40) (Yellow koji mold), this protein is Alpha-glucosidase (agdA).